The sequence spans 664 residues: Putative peroxisomal acyl-coenzyme A oxidase 1.2 (664 aa).

399–404 (CGGHGY) provides a ligand contact to FAD. The Microbody targeting signal signature appears at 662 to 664 (AKL).

It belongs to the acyl-CoA oxidase family. It depends on FAD as a cofactor.

The protein localises to the peroxisome. It catalyses the reaction a 2,3-saturated acyl-CoA + O2 = a (2E)-enoyl-CoA + H2O2. Functionally, catalyzes the desaturation of acyl-CoAs to 2-trans-enoyl-CoAs. This chain is Putative peroxisomal acyl-coenzyme A oxidase 1.2 (ACX1.2), found in Arabidopsis thaliana (Mouse-ear cress).